A 127-amino-acid chain; its full sequence is uncharacterized protein (127 aa).

The stretch at 71–126 (FYLREYRRIRRRIKELKNRAKYISKGEIAYNPKIMKEVEALKEKLSEIEKKIEELK) forms a coiled coil.

This is an uncharacterized protein from Aquifex aeolicus (strain VF5).